Consider the following 236-residue polypeptide: Small ribosomal subunit protein uS3c (236 aa).

A KH type-2 domain is found at 47-127 (VRKYVRSSSR…KLNMTLSQVA (81 aa)).

It belongs to the universal ribosomal protein uS3 family. As to quaternary structure, part of the 30S ribosomal subunit.

Its subcellular location is the plastid. It is found in the chloroplast. The sequence is that of Small ribosomal subunit protein uS3c (rps3) from Zygnema circumcarinatum (Green alga).